The following is a 201-amino-acid chain: Inosine triphosphate pyrophosphatase (201 aa).

An ITP-binding site is contributed by 16 to 21; that stretch reads TGNAKK. Residue glutamate 44 coordinates Mg(2+). ITP is bound by residues lysine 56, 72–73, lysine 89, 148–151, lysine 171, and 176–177; these read DT, FGWD, and HR.

It belongs to the HAM1 NTPase family. As to quaternary structure, homodimer. Mg(2+) serves as cofactor. Mn(2+) is required as a cofactor.

The protein localises to the cytoplasm. The catalysed reaction is ITP + H2O = IMP + diphosphate + H(+). It catalyses the reaction dITP + H2O = dIMP + diphosphate + H(+). It carries out the reaction XTP + H2O = XMP + diphosphate + H(+). In terms of biological role, pyrophosphatase that hydrolyzes non-canonical purine nucleotides such as inosine triphosphate (ITP), deoxyinosine triphosphate (dITP) or xanthosine 5'-triphosphate (XTP) to their respective monophosphate derivatives. The enzyme does not distinguish between the deoxy- and ribose forms. Probably excludes non-canonical purines from RNA and DNA precursor pools, thus preventing their incorporation into RNA and DNA and avoiding chromosomal lesions. The chain is Inosine triphosphate pyrophosphatase from Zea mays (Maize).